Here is a 372-residue protein sequence, read N- to C-terminus: tRNA-specific 2-thiouridylase MnmA (372 aa).

ATP is bound by residues 16–23 (GMSGGVDS) and Met-42. The tract at residues 102 to 104 (NPD) is interaction with target base in tRNA. The Nucleophile role is filled by Cys-107. A disulfide bridge links Cys-107 with Cys-205. An ATP-binding site is contributed by Gly-132. The interaction with tRNA stretch occupies residues 155-157 (KDQ). The active-site Cysteine persulfide intermediate is the Cys-205. Residues 317-318 (RY) form an interaction with tRNA region.

The protein belongs to the MnmA/TRMU family.

It localises to the cytoplasm. It catalyses the reaction S-sulfanyl-L-cysteinyl-[protein] + uridine(34) in tRNA + AH2 + ATP = 2-thiouridine(34) in tRNA + L-cysteinyl-[protein] + A + AMP + diphosphate + H(+). Catalyzes the 2-thiolation of uridine at the wobble position (U34) of tRNA, leading to the formation of s(2)U34. The chain is tRNA-specific 2-thiouridylase MnmA from Shewanella sp. (strain MR-4).